Reading from the N-terminus, the 372-residue chain is tRNA-specific 2-thiouridylase MnmA (372 aa).

Residues 13 to 20 (GMSGGVDS) and methionine 39 contribute to the ATP site. Positions 99 to 101 (NPD) are interaction with target base in tRNA. Residue cysteine 104 is the Nucleophile of the active site. Residues cysteine 104 and cysteine 200 are joined by a disulfide bond. Glycine 128 serves as a coordination point for ATP. An interaction with tRNA region spans residues 150–152 (KDQ). The Cysteine persulfide intermediate role is filled by cysteine 200. The interaction with tRNA stretch occupies residues 310 to 311 (RY).

It belongs to the MnmA/TRMU family.

It is found in the cytoplasm. The enzyme catalyses S-sulfanyl-L-cysteinyl-[protein] + uridine(34) in tRNA + AH2 + ATP = 2-thiouridine(34) in tRNA + L-cysteinyl-[protein] + A + AMP + diphosphate + H(+). In terms of biological role, catalyzes the 2-thiolation of uridine at the wobble position (U34) of tRNA, leading to the formation of s(2)U34. The chain is tRNA-specific 2-thiouridylase MnmA from Bacillus pumilus (strain SAFR-032).